The sequence spans 347 residues: Sulfate/thiosulfate import ATP-binding protein CysA 1 (347 aa).

One can recognise an ABC transporter domain in the interval 3–237 (VRVESLRKEF…PVSPFVYGFI (235 aa)). Residue 35 to 42 (GPSGSGKT) coordinates ATP.

It belongs to the ABC transporter superfamily. Sulfate/tungstate importer (TC 3.A.1.6) family. As to quaternary structure, the complex is composed of two ATP-binding proteins (CysA), two transmembrane proteins (CysT and CysW) and a solute-binding protein (CysP).

The protein localises to the cell inner membrane. The catalysed reaction is sulfate(out) + ATP + H2O = sulfate(in) + ADP + phosphate + H(+). It carries out the reaction thiosulfate(out) + ATP + H2O = thiosulfate(in) + ADP + phosphate + H(+). Part of the ABC transporter complex CysAWTP involved in sulfate/thiosulfate import. Responsible for energy coupling to the transport system. This chain is Sulfate/thiosulfate import ATP-binding protein CysA 1, found in Rhizobium meliloti (strain 1021) (Ensifer meliloti).